The chain runs to 100 residues: Large ribosomal subunit protein bL21 (100 aa).

Belongs to the bacterial ribosomal protein bL21 family. Part of the 50S ribosomal subunit. Contacts protein L20.

Functionally, this protein binds to 23S rRNA in the presence of protein L20. The protein is Large ribosomal subunit protein bL21 of Mycoplasmoides gallisepticum (strain R(low / passage 15 / clone 2)) (Mycoplasma gallisepticum).